Consider the following 540-residue polypeptide: CTP synthase (540 aa).

Residues 1 to 265 form an amidoligase domain region; that stretch reads MVRFIFITGG…DNKVLKFFNL (265 aa). Position 13 (Ser-13) interacts with CTP. Residue Ser-13 coordinates UTP. ATP contacts are provided by residues 14–19 and Asp-71; that span reads SLGKGL. Mg(2+) is bound by residues Asp-71 and Glu-139. CTP contacts are provided by residues 146–148, 186–191, and Lys-222; these read DIE and KTKPTQ. Residues 186–191 and Lys-222 each bind UTP; that span reads KTKPTQ. Positions 290 to 539 constitute a Glutamine amidotransferase type-1 domain; the sequence is RIAIIAKYHK…VEAAIKYNKN (250 aa). Gly-352 contacts L-glutamine. The Nucleophile; for glutamine hydrolysis role is filled by Cys-379. Residues 380 to 383, Glu-403, and Arg-467 each bind L-glutamine; that span reads LGMQ. Catalysis depends on residues His-512 and Glu-514.

It belongs to the CTP synthase family. In terms of assembly, homotetramer.

The enzyme catalyses UTP + L-glutamine + ATP + H2O = CTP + L-glutamate + ADP + phosphate + 2 H(+). It catalyses the reaction L-glutamine + H2O = L-glutamate + NH4(+). The catalysed reaction is UTP + NH4(+) + ATP = CTP + ADP + phosphate + 2 H(+). It participates in pyrimidine metabolism; CTP biosynthesis via de novo pathway; CTP from UDP: step 2/2. With respect to regulation, allosterically activated by GTP, when glutamine is the substrate; GTP has no effect on the reaction when ammonia is the substrate. The allosteric effector GTP functions by stabilizing the protein conformation that binds the tetrahedral intermediate(s) formed during glutamine hydrolysis. Inhibited by the product CTP, via allosteric rather than competitive inhibition. Its function is as follows. Catalyzes the ATP-dependent amination of UTP to CTP with either L-glutamine or ammonia as the source of nitrogen. Regulates intracellular CTP levels through interactions with the four ribonucleotide triphosphates. This chain is CTP synthase, found in Rickettsia bellii (strain RML369-C).